Reading from the N-terminus, the 339-residue chain is Anthranilate phosphoribosyltransferase (339 aa).

Residues Gly81, 84 to 85 (GD), Ser89, 91 to 94 (NVSS), 109 to 117 (KHGNRALSS), and Ala121 each bind 5-phospho-alpha-D-ribose 1-diphosphate. Position 81 (Gly81) interacts with anthranilate. Ser93 serves as a coordination point for Mg(2+). Position 112 (Asn112) interacts with anthranilate. Position 167 (Arg167) interacts with anthranilate. 2 residues coordinate Mg(2+): Asp225 and Glu226.

The protein belongs to the anthranilate phosphoribosyltransferase family. In terms of assembly, homodimer. It depends on Mg(2+) as a cofactor.

The enzyme catalyses N-(5-phospho-beta-D-ribosyl)anthranilate + diphosphate = 5-phospho-alpha-D-ribose 1-diphosphate + anthranilate. It functions in the pathway amino-acid biosynthesis; L-tryptophan biosynthesis; L-tryptophan from chorismate: step 2/5. Functionally, catalyzes the transfer of the phosphoribosyl group of 5-phosphorylribose-1-pyrophosphate (PRPP) to anthranilate to yield N-(5'-phosphoribosyl)-anthranilate (PRA). The sequence is that of Anthranilate phosphoribosyltransferase from Brucella abortus (strain S19).